A 421-amino-acid chain; its full sequence is Imidazolonepropionase (421 aa).

Fe(3+)-binding residues include histidine 81 and histidine 83. Zn(2+) is bound by residues histidine 81 and histidine 83. 4-imidazolone-5-propanoate-binding residues include arginine 90, tyrosine 153, and histidine 186. An N-formimidoyl-L-glutamate-binding site is contributed by tyrosine 153. Fe(3+) is bound at residue histidine 251. Histidine 251 provides a ligand contact to Zn(2+). A 4-imidazolone-5-propanoate-binding site is contributed by glutamate 254. Residue aspartate 326 coordinates Fe(3+). Aspartate 326 provides a ligand contact to Zn(2+). N-formimidoyl-L-glutamate is bound by residues asparagine 328 and glycine 330. Serine 331 contributes to the 4-imidazolone-5-propanoate binding site.

The protein belongs to the metallo-dependent hydrolases superfamily. HutI family. Zn(2+) serves as cofactor. The cofactor is Fe(3+).

The protein localises to the cytoplasm. It catalyses the reaction 4-imidazolone-5-propanoate + H2O = N-formimidoyl-L-glutamate. It participates in amino-acid degradation; L-histidine degradation into L-glutamate; N-formimidoyl-L-glutamate from L-histidine: step 3/3. Functionally, catalyzes the hydrolytic cleavage of the carbon-nitrogen bond in imidazolone-5-propanoate to yield N-formimidoyl-L-glutamate. It is the third step in the universal histidine degradation pathway. This is Imidazolonepropionase from Streptococcus pyogenes serotype M2 (strain MGAS10270).